The primary structure comprises 109 residues: Large ribosomal subunit protein uL24 (109 aa).

The protein belongs to the universal ribosomal protein uL24 family. In terms of assembly, part of the 50S ribosomal subunit.

One of two assembly initiator proteins, it binds directly to the 5'-end of the 23S rRNA, where it nucleates assembly of the 50S subunit. In terms of biological role, one of the proteins that surrounds the polypeptide exit tunnel on the outside of the subunit. This chain is Large ribosomal subunit protein uL24, found in Rickettsia bellii (strain RML369-C).